A 234-amino-acid polypeptide reads, in one-letter code: Transmembrane protein 65 (234 aa).

The transit peptide at M1–E55 directs the protein to the mitochondrion. The Cytoplasmic segment spans residues P56–Y110. A helical transmembrane segment spans residues V111 to I131. Over V132 to E138 the chain is Extracellular. Residues L139 to V159 traverse the membrane as a helical segment. Topologically, residues S160–K203 are cytoplasmic. Residues A204 to S224 traverse the membrane as a helical segment. Topologically, residues E225 to N234 are extracellular.

In terms of assembly, monomer. Homodimer. Interacts with GJA1. Interacts weakly with DSP. Interacts with SCN1B. In terms of tissue distribution, predominantly expressed in the ventricular tissue (at protein level).

Its subcellular location is the cell membrane. It localises to the mitochondrion inner membrane. Functionally, essential for maintaining proper cardiac intercalated disk (ICD) structure and function as well as cardiac conduction velocity in the heart. Its association with SCN1B is required for stabilizing the perinexus in the ICD and for localization of GJA1 and SCN5A to the ICD. May regulate the function of the gap junction protein GJA1 and may contribute to the stability and proper localization of GJA1 to cardiac intercalated disk thereby regulating gap junction communication. Regulates mitochondrial respiration and mitochondrial DNA copy number maintenance. This is Transmembrane protein 65 (Tmem65) from Mus musculus (Mouse).